Consider the following 251-residue polypeptide: CDP-diacylglycerol pyrophosphatase (251 aa).

A helical transmembrane segment spans residues 5-25 (GYFLLAVIVIVAAAGVGYWKF).

Belongs to the Cdh family.

Its subcellular location is the cell inner membrane. It catalyses the reaction a CDP-1,2-diacyl-sn-glycerol + H2O = a 1,2-diacyl-sn-glycero-3-phosphate + CMP + 2 H(+). It participates in phospholipid metabolism; CDP-diacylglycerol degradation; phosphatidate from CDP-diacylglycerol: step 1/1. This chain is CDP-diacylglycerol pyrophosphatase, found in Salmonella paratyphi A (strain ATCC 9150 / SARB42).